A 329-amino-acid chain; its full sequence is MDPTTPAWGTESTTMDGNDQSLPLLCDKEALIPVFLILFIALVGLVGNGFVLWLLGFRMSRNAFSVYVLSLAGADFLFLCFQIINCLVYLRDFFCSISINFPSXFTTVMTCAYLAGLSMLSTISTERCLSVLWPIWYRCRRPRHLSAVVCVLLWALSLLLSILEGKFCGFLFSDGDFGWCQIFDFITAAWLIFLFVVLCASSLALLVRILCGSRGLPLTRLYLTILLTVLVFLLCGLPFGIQWFLILGFWNSDVLLCHIHLVSVVLSSLNSSANPIIYFFVGSFRKQWRLQQPILKLAFQRALQDTAEVDHSEGCFPQGTSEMSRSSLV.

The Extracellular portion of the chain corresponds to 1-33 (MDPTTPAWGTESTTMDGNDQSLPLLCDKEALIP). The chain crosses the membrane as a helical span at residues 34 to 54 (VFLILFIALVGLVGNGFVLWL). Residues 55–63 (LGFRMSRNA) lie on the Cytoplasmic side of the membrane. A helical membrane pass occupies residues 64 to 84 (FSVYVLSLAGADFLFLCFQII). Over 85-96 (NCLVYLRDFFCS) the chain is Extracellular. Residues 97 to 117 (ISINFPSXFTTVMTCAYLAGL) traverse the membrane as a helical segment. The Cytoplasmic portion of the chain corresponds to 118-144 (SMLSTISTERCLSVLWPIWYRCRRPRH). Residues 145 to 165 (LSAVVCVLLWALSLLLSILEG) form a helical membrane-spanning segment. Topologically, residues 166 to 184 (KFCGFLFSDGDFGWCQIFD) are extracellular. The helical transmembrane segment at 185–205 (FITAAWLIFLFVVLCASSLAL) threads the bilayer. At 206–228 (LVRILCGSRGLPLTRLYLTILLT) the chain is on the cytoplasmic side. The chain crosses the membrane as a helical span at residues 229–249 (VLVFLLCGLPFGIQWFLILGF). The Extracellular segment spans residues 250–263 (WNSDVLLCHIHLVS). The helical transmembrane segment at 264–284 (VVLSSLNSSANPIIYFFVGSF) threads the bilayer. The Cytoplasmic segment spans residues 285–329 (RKQWRLQQPILKLAFQRALQDTAEVDHSEGCFPQGTSEMSRSSLV).

This sequence belongs to the G-protein coupled receptor 1 family. Mas subfamily.

It localises to the cell membrane. In terms of biological role, mast cell-specific receptor for basic secretagogues, i.e. cationic amphiphilic drugs, as well as endo- or exogenous peptides, consisting of a basic head group and a hydrophobic core. Recognizes and binds small molecules containing a cyclized tetrahydroisoquinoline (THIQ), such as non-steroidal neuromuscular blocking drugs (NMBDs), including tubocurarine and atracurium. In response to these compounds, mediates pseudo-allergic reactions characterized by histamine release, inflammation and airway contraction. The chain is Mas-related G-protein coupled receptor member X2 (MRGPRX2) from Hoolock hoolock (Western hoolock gibbon).